Reading from the N-terminus, the 389-residue chain is Serpentine receptor class alpha/beta-14 (389 aa).

Topologically, residues 1 to 45 (MPSDDFVKTARKALISHSVSIQNYTEDDCQIAFHATTNSFMQTIR) are extracellular. N-linked (GlcNAc...) asparagine glycosylation occurs at asparagine 23. A helical transmembrane segment spans residues 46 to 66 (LVHIFFCTFGAISSSLFIYVL). At 67–81 (LNSSSRNLHRNLRIS) the chain is on the cytoplasmic side. The helical transmembrane segment at 82–102 (LASLAFAALIACLQLDFIAFY) threads the bilayer. Residues 103–123 (HLALTLTADNACDSMYEARKC) are Extracellular-facing. Cysteine 123 and cysteine 198 form a disulfide bridge. A helical transmembrane segment spans residues 124–144 (AILRFPVVLSIYATLCGIIVL). The Cytoplasmic portion of the chain corresponds to 145 to 167 (AIERTIATLKYKTYEANGSRVVG). Residues 168-188 (LVLVTGQWFVCIIVAVFSVLL) form a helical membrane-spanning segment. At 189-208 (RSDPGYVHYCTAYVSHPRTS) the chain is on the extracellular side. A helical transmembrane segment spans residues 209–229 (VFSLCFMSALEVATLVYFVLL). Over 230–268 (LQSNQRRQVNEFVNKAMHSLSERYQLQENVRIMKILIPS) the chain is Cytoplasmic. A helical membrane pass occupies residues 269–289 (ITVHAILGFIGLGSMLAFAII). Over 290–303 (YRYADERLIVGFAP) the chain is Extracellular. A helical membrane pass occupies residues 304–324 (FSEVVLLVIPIYAVVFPIVAV). Topologically, residues 325–389 (VQNKQLRLAS…FDLLNEMWKK (65 aa)) are cytoplasmic.

It belongs to the nematode receptor-like protein srab family.

It localises to the membrane. The sequence is that of Serpentine receptor class alpha/beta-14 from Caenorhabditis elegans.